The sequence spans 113 residues: U11-theraphotoxin-Hhn1a (113 aa).

The first 21 residues, 1-21 (MNTVRVTFLLVFVLAVSLGQA), serve as a signal peptide directing secretion. The propeptide occupies 22–74 (DKDENRMEMQEKTEQGRSYLDFAENLLLQKLEELEAKLLEEDSEESRNSRQKR). Residues 61 to 83 (EEDSEESRNSRQKRCIGEGVPCD) are disordered. Disulfide bonds link Cys-75–Cys-90, Cys-82–Cys-95, and Cys-89–Cys-110.

It belongs to the neurotoxin 14 (magi-1) family. 01 (HNTX-16) subfamily. In terms of tissue distribution, expressed by the venom gland.

Its subcellular location is the secreted. Its function is as follows. Probable ion channel inhibitor. This chain is U11-theraphotoxin-Hhn1a, found in Cyriopagopus hainanus (Chinese bird spider).